The chain runs to 661 residues: Polyadenylate-binding protein, cytoplasmic and nuclear (661 aa).

A compositionally biased stretch (polar residues) spans 1-11; sequence MSAAETNQVQE. A disordered region spans residues 1 to 61; that stretch reads MSAAETNQVQ…SAEEQGESSG (61 aa). The segment covering 20-51 has biased composition (low complexity); that stretch reads SSSSPAAGGATTATTTNNAESSDATSSSVPAD. 4 consecutive RRM domains span residues 67–145, 155–232, 248–325, and 351–428; these read ASLY…WSQR, GNIF…KHVS, TNIY…RAQK, and VNLF…LAQR. Residues 473–563 are disordered; sequence FPPNGRGNAP…PNRPAGGNVP (91 aa). Residues 501-511 show a composition bias toward pro residues; sequence EQWPRPGPNGQ. The segment covering 523–532 has biased composition (polar residues); sequence QDFNGQNMRP. Positions 533–549 are enriched in low complexity; it reads QQQQQQQQQQQQQQQQQ. The region spanning 563-644 is the PABC domain; that stretch reads PAKDLAALIA…ALNAFEEYKN (82 aa).

The protein belongs to the polyadenylate-binding protein type-1 family.

The protein resides in the cytoplasm. It localises to the nucleus. Its function is as follows. Binds the poly(A) tail of mRNA. Appears to be an important mediator of the multiple roles of the poly(A) tail in mRNA biogenesis, stability and translation. In the nucleus, involved in both mRNA cleavage and polyadenylation. Is also required for efficient mRNA export to the cytoplasm. Acts in concert with a poly(A)-specific nuclease (PAN) to affect poly(A) tail shortening, which may occur concomitantly with either nucleocytoplasmic mRNA transport or translational initiation. In the cytoplasm, stimulates translation initiation and regulates mRNA decay through translation termination-coupled poly(A) shortening, probably mediated by PAN. The polypeptide is Polyadenylate-binding protein, cytoplasmic and nuclear (PAB1) (Lodderomyces elongisporus (strain ATCC 11503 / CBS 2605 / JCM 1781 / NBRC 1676 / NRRL YB-4239) (Yeast)).